The following is a 288-amino-acid chain: Light-independent protochlorophyllide reductase iron-sulfur ATP-binding protein (288 aa).

ATP-binding positions include glycine 10–threonine 15 and lysine 39. Serine 14 is a binding site for Mg(2+). Residues cysteine 95 and cysteine 129 each coordinate [4Fe-4S] cluster. An ATP-binding site is contributed by asparagine 180–arginine 181.

Belongs to the NifH/BchL/ChlL family. In terms of assembly, homodimer. Protochlorophyllide reductase is composed of three subunits; ChlL, ChlN and ChlB. [4Fe-4S] cluster serves as cofactor.

The protein resides in the plastid. It localises to the chloroplast. It carries out the reaction chlorophyllide a + oxidized 2[4Fe-4S]-[ferredoxin] + 2 ADP + 2 phosphate = protochlorophyllide a + reduced 2[4Fe-4S]-[ferredoxin] + 2 ATP + 2 H2O. The protein operates within porphyrin-containing compound metabolism; chlorophyll biosynthesis (light-independent). Functionally, component of the dark-operative protochlorophyllide reductase (DPOR) that uses Mg-ATP and reduced ferredoxin to reduce ring D of protochlorophyllide (Pchlide) to form chlorophyllide a (Chlide). This reaction is light-independent. The L component serves as a unique electron donor to the NB-component of the complex, and binds Mg-ATP. In Chara vulgaris (Common stonewort), this protein is Light-independent protochlorophyllide reductase iron-sulfur ATP-binding protein.